The following is a 460-amino-acid chain: Transcription factor AP-2-beta (460 aa).

Lys21 participates in a covalent cross-link: Glycyl lysine isopeptide (Lys-Gly) (interchain with G-Cter in SUMO). The disordered stretch occupies residues 30 to 139 (HDGVPSHSSR…PQLSGLDPRR (110 aa)). Residues 35–51 (SHSSRLSQLGSVSQGPY) are compositionally biased toward polar residues. Residues 121–132 (LLPQPRAALPQL) are compositionally biased toward low complexity. At Ser258 the chain carries Phosphoserine; by PKA. The tract at residues 435–460 (NTTTNRHTSGEGPGSKTGDKEEKHRK) is disordered. Positions 451-460 (TGDKEEKHRK) are enriched in basic and acidic residues.

The protein belongs to the AP-2 family. Binds DNA as a dimer. Can form homodimers or heterodimers with other AP-2 family members. Interacts with CITED4. Interacts with UBE2I. Interacts with KCTD1; this interaction represses transcription activation. Interacts with CITED2 (via C-terminus); the interaction stimulates TFAP2B-transcriptional activity. Sumoylated on Lys-21; which inhibits transcriptional activity.

It localises to the nucleus. Its function is as follows. Sequence-specific DNA-binding protein that interacts with inducible viral and cellular enhancer elements to regulate transcription of selected genes. AP-2 factors bind to the consensus sequence 5'-GCCNNNGGC-3' and activate genes involved in a large spectrum of important biological functions including proper eye, face, body wall, limb and neural tube development. They also suppress a number of genes including MCAM/MUC18, C/EBP alpha and MYC. AP-2-beta appears to be required for normal face and limb development and for proper terminal differentiation and function of renal tubular epithelia. This is Transcription factor AP-2-beta (TFAP2B) from Canis lupus familiaris (Dog).